The chain runs to 432 residues: Amino-acid acetyltransferase (432 aa).

An N-acetyltransferase domain is found at E286 to S425.

Belongs to the acetyltransferase family. ArgA subfamily.

The protein localises to the cytoplasm. It catalyses the reaction L-glutamate + acetyl-CoA = N-acetyl-L-glutamate + CoA + H(+). The protein operates within amino-acid biosynthesis; L-arginine biosynthesis; N(2)-acetyl-L-ornithine from L-glutamate: step 1/4. This Pseudomonas syringae pv. tomato (strain ATCC BAA-871 / DC3000) protein is Amino-acid acetyltransferase.